Consider the following 208-residue polypeptide: ATP phosphoribosyltransferase (208 aa).

Belongs to the ATP phosphoribosyltransferase family. Short subfamily. As to quaternary structure, heteromultimer composed of HisG and HisZ subunits.

It is found in the cytoplasm. The enzyme catalyses 1-(5-phospho-beta-D-ribosyl)-ATP + diphosphate = 5-phospho-alpha-D-ribose 1-diphosphate + ATP. It participates in amino-acid biosynthesis; L-histidine biosynthesis; L-histidine from 5-phospho-alpha-D-ribose 1-diphosphate: step 1/9. Catalyzes the condensation of ATP and 5-phosphoribose 1-diphosphate to form N'-(5'-phosphoribosyl)-ATP (PR-ATP). Has a crucial role in the pathway because the rate of histidine biosynthesis seems to be controlled primarily by regulation of HisG enzymatic activity. The sequence is that of ATP phosphoribosyltransferase (hisG) from Thermotoga maritima (strain ATCC 43589 / DSM 3109 / JCM 10099 / NBRC 100826 / MSB8).